A 506-amino-acid polypeptide reads, in one-letter code: Ecdysteroid UDP-glucosyltransferase (506 aa).

Positions 1-18 (MTILCWLALLSTLTAVNA) are cleaved as a signal peptide.

Belongs to the UDP-glycosyltransferase family. Glycosylated.

Catalyzes the transfer of glucose from UDP-glucose to ecdysteroids which are insect molting hormones. Acts on the host at the organismal level to block its development, thereby increasing the yield of progeny virus. In Lepidoptera (butterflies and moths), this protein is Ecdysteroid UDP-glucosyltransferase (EGT).